Here is a 281-residue protein sequence, read N- to C-terminus: Transmembrane protein 41A-A (281 aa).

Positions 1-22 (MRSLVGLVAVIVTATFYLYSLS) are cleaved as a signal peptide. The segment at 32–56 (HKQSHEGETTDAKDGDEPSEMETAS) is disordered. Over residues 34–47 (QSHEGETTDAKDGD) the composition is skewed to basic and acidic residues. 5 consecutive transmembrane segments (helical) span residues 84–104 (GYVLLLFCSAYLYKQAFAIPG), 107–127 (FLNILAGALFGTWFGLLLTCV), 170–190 (LFFFLLFLRFFPMSPNWFLNM), 197–217 (IPVTLFFMAVFIGLMPYNFIC), and 236–256 (WSVVLKLLLTACVALLPGALI).

This sequence belongs to the TMEM41 family.

The protein localises to the membrane. The sequence is that of Transmembrane protein 41A-A (tmem41aa) from Danio rerio (Zebrafish).